The primary structure comprises 170 residues: CFA/I fimbrial subunit B (170 aa).

A signal peptide spans 1–23 (MKFKKTIGAMALTTMFVAVSASA).

Belongs to the fimbrial CS1 protein family. As to quaternary structure, CFA/I fimbriae are rather rigid, thread-like filaments of 0.5-1 micrometer, with an apparent axial hole, and a diameter of 7 nanometers. A single CFA/I fimbria consists of about 100 identical protein subunits.

The protein localises to the fimbrium. In terms of biological role, fimbriae (also called pili), polar filaments radiating from the surface of the bacterium to a length of 0.5-1.5 micrometers and numbering 100-300 per cell, enable bacteria to colonize the epithelium of specific host organs. This is CFA/I fimbrial subunit B (cfaB) from Escherichia coli.